Reading from the N-terminus, the 139-residue chain is ATP synthase epsilon chain (139 aa).

This sequence belongs to the ATPase epsilon chain family. As to quaternary structure, F-type ATPases have 2 components, CF(1) - the catalytic core - and CF(0) - the membrane proton channel. CF(1) has five subunits: alpha(3), beta(3), gamma(1), delta(1), epsilon(1). CF(0) has three main subunits: a, b and c.

The protein localises to the cell inner membrane. In terms of biological role, produces ATP from ADP in the presence of a proton gradient across the membrane. The polypeptide is ATP synthase epsilon chain (Pseudomonas putida (strain ATCC 47054 / DSM 6125 / CFBP 8728 / NCIMB 11950 / KT2440)).